The primary structure comprises 513 residues: MGAAAKLAFAVFLISCSSGAILGRSETQECLFFNANWERDRTNQTGVEPCYGDKDKRRHCFATWKNISGSIEIVKQGCWLDDINCYDRTDCIEKKDSPEVYFCCCEGNMCNEKFSYFPEMEVTQPTSNPVTPKPPYYNILLYSLVPLMLIAGIVICAFWVYRHHKMAYPPVLVPTQDPGPPPPSPLLGLKPLQLLEVKARGRFGCVWKAQLLNEYVAVKIFPIQDKQSWQNEYEVYSLPGMKHENILQFIGAEKRGTSVDVDLWLITAFHEKGSLSDFLKANVVSWNELCHIAETMARGLAYLHEDIPGLKDGHKPAISHRDIKSKNVLLKNNLTACIADFGLALKFEAGKSAGDTHGQVGTRRYMAPEVLEGAINFQRDAFLRIDMYAMGLVLWELASRCTAADGPVDEYMLPFEEEIGQHPSLEDMQEVVVHKKKRPVLRDYWQKHAGMAMLCETIEECWDHDAEARLSAGCVGERITQMQRLTNIITTEDIVTVVTMVTNVDFPPKESSL.

The N-terminal stretch at Met-1–Gly-19 is a signal peptide. At Ala-20–Pro-135 the chain is on the extracellular side. 5 disulfide bridges follow: Cys-30-Cys-60, Cys-50-Cys-78, Cys-85-Cys-104, Cys-91-Cys-103, and Cys-105-Cys-110. N-linked (GlcNAc...) asparagine glycans are attached at residues Asn-43 and Asn-66. A helical membrane pass occupies residues Tyr-136–Tyr-161. At Arg-162 to Leu-513 the chain is on the cytoplasmic side. Residues Leu-192–Leu-485 enclose the Protein kinase domain. Residues Lys-198–Val-206 and Lys-219 contribute to the ATP site. The active-site Proton acceptor is Asp-322.

Belongs to the protein kinase superfamily. TKL Ser/Thr protein kinase family. TGFB receptor subfamily. Part of a complex consisting of MAGI2/ARIP1, ACVR2A, ACVR1B and SMAD3. Interacts with MAGI2/ARIP1. Interacts with type I receptor ACVR1. Interacts with BMP7. Interacts with TSC22D1/TSC-22. Interacts with activin A/INHBA. The cofactor is Mg(2+). Mn(2+) is required as a cofactor. Brain, testis, intestine, liver and kidney.

The protein resides in the cell membrane. The catalysed reaction is L-threonyl-[receptor-protein] + ATP = O-phospho-L-threonyl-[receptor-protein] + ADP + H(+). It carries out the reaction L-seryl-[receptor-protein] + ATP = O-phospho-L-seryl-[receptor-protein] + ADP + H(+). Functionally, on ligand binding, forms a receptor complex consisting of two type II and two type I transmembrane serine/threonine kinases. Type II receptors phosphorylate and activate type I receptors which autophosphorylate, then bind and activate SMAD transcriptional regulators. Receptor for activin A, activin B and inhibin A. Mediates induction of adipogenesis by GDF6. In Mus musculus (Mouse), this protein is Activin receptor type-2A.